The chain runs to 303 residues: UDP-3-O-acyl-N-acetylglucosamine deacetylase (303 aa).

3 residues coordinate Zn(2+): histidine 78, histidine 237, and aspartate 241. Catalysis depends on histidine 264, which acts as the Proton donor.

This sequence belongs to the LpxC family. Zn(2+) is required as a cofactor.

The enzyme catalyses a UDP-3-O-[(3R)-3-hydroxyacyl]-N-acetyl-alpha-D-glucosamine + H2O = a UDP-3-O-[(3R)-3-hydroxyacyl]-alpha-D-glucosamine + acetate. The protein operates within glycolipid biosynthesis; lipid IV(A) biosynthesis; lipid IV(A) from (3R)-3-hydroxytetradecanoyl-[acyl-carrier-protein] and UDP-N-acetyl-alpha-D-glucosamine: step 2/6. In terms of biological role, catalyzes the hydrolysis of UDP-3-O-myristoyl-N-acetylglucosamine to form UDP-3-O-myristoylglucosamine and acetate, the committed step in lipid A biosynthesis. The chain is UDP-3-O-acyl-N-acetylglucosamine deacetylase from Pseudomonas fluorescens (strain ATCC BAA-477 / NRRL B-23932 / Pf-5).